The sequence spans 168 residues: uncharacterized protein (168 aa).

This is an uncharacterized protein from Bacillus subtilis (strain 168).